We begin with the raw amino-acid sequence, 278 residues long: Diaminopimelate epimerase (278 aa).

3 residues coordinate substrate: Asn-13, Gln-46, and Asn-65. Cys-74 serves as the catalytic Proton donor. Residues 75–76 (GN), Asn-157, Asn-190, and 208–209 (ER) contribute to the substrate site. Residue Cys-217 is the Proton acceptor of the active site. 218–219 (GT) provides a ligand contact to substrate.

This sequence belongs to the diaminopimelate epimerase family. In terms of assembly, homodimer.

It is found in the cytoplasm. It catalyses the reaction (2S,6S)-2,6-diaminopimelate = meso-2,6-diaminopimelate. The protein operates within amino-acid biosynthesis; L-lysine biosynthesis via DAP pathway; DL-2,6-diaminopimelate from LL-2,6-diaminopimelate: step 1/1. Catalyzes the stereoinversion of LL-2,6-diaminopimelate (L,L-DAP) to meso-diaminopimelate (meso-DAP), a precursor of L-lysine and an essential component of the bacterial peptidoglycan. The protein is Diaminopimelate epimerase of Magnetococcus marinus (strain ATCC BAA-1437 / JCM 17883 / MC-1).